A 216-amino-acid polypeptide reads, in one-letter code: Flagellar transcriptional regulator FlhC (216 aa).

Zn(2+) contacts are provided by C137, C140, C157, and C160.

It belongs to the FlhC family. In terms of assembly, heterohexamer composed of two FlhC and four FlhD subunits. Each FlhC binds a FlhD dimer, forming a heterotrimer, and a hexamer assembles by dimerization of two heterotrimers. It depends on Zn(2+) as a cofactor.

It localises to the cytoplasm. In terms of biological role, functions in complex with FlhD as a master transcriptional regulator that regulates transcription of several flagellar and non-flagellar operons by binding to their promoter region. Activates expression of class 2 flagellar genes, including fliA, which is a flagellum-specific sigma factor that turns on the class 3 genes. Also regulates genes whose products function in a variety of physiological pathways. The sequence is that of Flagellar transcriptional regulator FlhC from Paraburkholderia atlantica.